Reading from the N-terminus, the 870-residue chain is Protein csx2 (870 aa).

The tract at residues 212–251 is disordered; sequence TSPEISDAPPLSGNVDPLPINSPPLTNPVARDIDQTEPED. The PH domain maps to 510–614; that stretch reads TSAKQGLLLA…WIEAIQYSIS (105 aa). Phosphoserine occurs at positions 625, 653, and 655. The segment at 647 to 672 is disordered; it reads RVASVTSPSRHNSDSKEKKQTKSPSL. Positions 657 to 666 are enriched in basic and acidic residues; sequence HNSDSKEKKQ. Residues 670–791 form the Arf-GAP domain; it reads PSLVKTLKEM…RFIKSSFSHD (122 aa). The C4-type zinc-finger motif lies at 686 to 710; it reads CADCNTTARVEWCAINFPVVLCIDC.

In Schizosaccharomyces pombe (strain 972 / ATCC 24843) (Fission yeast), this protein is Protein csx2 (csx2).